A 118-amino-acid polypeptide reads, in one-letter code: Ribonuclease P protein component 4 (118 aa).

Positions 59, 62, 85, and 88 each coordinate Zn(2+).

It belongs to the eukaryotic/archaeal RNase P protein component 4 family. Consists of a catalytic RNA component and at least 4-5 protein subunits. Requires Zn(2+) as cofactor.

It is found in the cytoplasm. The enzyme catalyses Endonucleolytic cleavage of RNA, removing 5'-extranucleotides from tRNA precursor.. Part of ribonuclease P, a protein complex that generates mature tRNA molecules by cleaving their 5'-ends. The protein is Ribonuclease P protein component 4 of Sulfolobus acidocaldarius (strain ATCC 33909 / DSM 639 / JCM 8929 / NBRC 15157 / NCIMB 11770).